A 121-amino-acid polypeptide reads, in one-letter code: NADH-quinone oxidoreductase subunit A 1 (121 aa).

The next 3 membrane-spanning stretches (helical) occupy residues 11–31 (IAIF…APFA), 65–85 (LVSI…PWAV), and 90–110 (MGWF…VGFI).

The protein belongs to the complex I subunit 3 family. In terms of assembly, NDH-1 is composed of 14 different subunits. Subunits NuoA, H, J, K, L, M, N constitute the membrane sector of the complex.

The protein localises to the cell inner membrane. The enzyme catalyses a quinone + NADH + 5 H(+)(in) = a quinol + NAD(+) + 4 H(+)(out). Functionally, NDH-1 shuttles electrons from NADH, via FMN and iron-sulfur (Fe-S) centers, to quinones in the respiratory chain. The immediate electron acceptor for the enzyme in this species is believed to be ubiquinone. Couples the redox reaction to proton translocation (for every two electrons transferred, four hydrogen ions are translocated across the cytoplasmic membrane), and thus conserves the redox energy in a proton gradient. In Rhizobium meliloti (strain 1021) (Ensifer meliloti), this protein is NADH-quinone oxidoreductase subunit A 1.